The chain runs to 298 residues: MSLKLDGKKLSLEIEERLNEYISSNKEIAKRAPGLAVIRIGEDPASGVYVNNKEKACSRVGIKSFIFHLKDNIEQKEVEQLINKLNLDKNIDGMLLQLPIPKKFDEQKLISHINPSKDVDGLNEINIGKLVKNEPAMRSCTPAGIINLLRSQNIKIEGKKIVVVGRSLLVGKPLSLMLLNLNGTVTMTHSKTLNLNKVCREADILIAAAGKPNLIDSSFVKEGAIIIDVGIHRLKSSNKNQTRLCGDVLLEDVISKVFAYTPVPGGVGPMTVTMLLVNTIFSWQKQFGLSSNLNDLLP.

NADP(+) contacts are provided by residues 165-167 (GRS), Ser190, and Ile231.

It belongs to the tetrahydrofolate dehydrogenase/cyclohydrolase family. In terms of assembly, homodimer.

The catalysed reaction is (6R)-5,10-methylene-5,6,7,8-tetrahydrofolate + NADP(+) = (6R)-5,10-methenyltetrahydrofolate + NADPH. It carries out the reaction (6R)-5,10-methenyltetrahydrofolate + H2O = (6R)-10-formyltetrahydrofolate + H(+). It functions in the pathway one-carbon metabolism; tetrahydrofolate interconversion. Functionally, catalyzes the oxidation of 5,10-methylenetetrahydrofolate to 5,10-methenyltetrahydrofolate and then the hydrolysis of 5,10-methenyltetrahydrofolate to 10-formyltetrahydrofolate. The chain is Bifunctional protein FolD from Prochlorococcus marinus (strain MIT 9301).